The chain runs to 212 residues: Imidazole glycerol phosphate synthase subunit HisH 2 (212 aa).

One can recognise a Glutamine amidotransferase type-1 domain in the interval 3–212 (RVAIIDYGIN…LMSNFLQWNP (210 aa)). Cysteine 82 (nucleophile) is an active-site residue. Residues histidine 192 and glutamate 194 contribute to the active site.

As to quaternary structure, heterodimer of HisH and HisF.

The protein localises to the cytoplasm. It catalyses the reaction 5-[(5-phospho-1-deoxy-D-ribulos-1-ylimino)methylamino]-1-(5-phospho-beta-D-ribosyl)imidazole-4-carboxamide + L-glutamine = D-erythro-1-(imidazol-4-yl)glycerol 3-phosphate + 5-amino-1-(5-phospho-beta-D-ribosyl)imidazole-4-carboxamide + L-glutamate + H(+). The catalysed reaction is L-glutamine + H2O = L-glutamate + NH4(+). The protein operates within amino-acid biosynthesis; L-histidine biosynthesis; L-histidine from 5-phospho-alpha-D-ribose 1-diphosphate: step 5/9. Its function is as follows. IGPS catalyzes the conversion of PRFAR and glutamine to IGP, AICAR and glutamate. The HisH subunit provides the glutamine amidotransferase activity that produces the ammonia necessary to HisF for the synthesis of IGP and AICAR. The polypeptide is Imidazole glycerol phosphate synthase subunit HisH 2 (Nitrobacter winogradskyi (strain ATCC 25391 / DSM 10237 / CIP 104748 / NCIMB 11846 / Nb-255)).